We begin with the raw amino-acid sequence, 506 residues long: Histidine--tRNA ligase, mitochondrial (506 aa).

A mitochondrion-targeting transit peptide spans 1-33; it reads MPQLGLLPGRAWTVLLGLLRPPPGALCIRAVRS. Position 67 is a phosphoserine (serine 67). L-histidine contacts are provided by residues 131-133, arginine 158, glutamine 174, aspartate 178, arginine 327, and 331-332; these read DLT and YY. Residue lysine 444 is modified to N6-acetyllysine.

This sequence belongs to the class-II aminoacyl-tRNA synthetase family. In terms of assembly, homodimer.

Its subcellular location is the mitochondrion. It catalyses the reaction tRNA(His) + L-histidine + ATP = L-histidyl-tRNA(His) + AMP + diphosphate + H(+). Functionally, mitochondrial aminoacyl-tRNA synthetase that catalyzes the ATP-dependent ligation of histidine to the 3'-end of its cognate tRNA, via the formation of an aminoacyl-adenylate intermediate (His-AMP). The protein is Histidine--tRNA ligase, mitochondrial (HARS2) of Bos taurus (Bovine).